Consider the following 62-residue polypeptide: Photosystem II reaction center protein Z (62 aa).

The next 2 helical transmembrane spans lie at 8–28 and 41–61; these read AVFA…VVFA and FSGT…NSLI.

Belongs to the PsbZ family. As to quaternary structure, PSII is composed of 1 copy each of membrane proteins PsbA, PsbB, PsbC, PsbD, PsbE, PsbF, PsbH, PsbI, PsbJ, PsbK, PsbL, PsbM, PsbT, PsbY, PsbZ, Psb30/Ycf12, at least 3 peripheral proteins of the oxygen-evolving complex and a large number of cofactors. It forms dimeric complexes.

It is found in the plastid. The protein resides in the chloroplast thylakoid membrane. Functionally, may control the interaction of photosystem II (PSII) cores with the light-harvesting antenna, regulates electron flow through the 2 photosystem reaction centers. PSII is a light-driven water plastoquinone oxidoreductase, using light energy to abstract electrons from H(2)O, generating a proton gradient subsequently used for ATP formation. The sequence is that of Photosystem II reaction center protein Z from Cucumis sativus (Cucumber).